A 65-amino-acid polypeptide reads, in one-letter code: MPKMKTNSGSKKRFALTGTGKIKRKHAFHSHILTKKSKKRKRNLCYSTTVDTTNVSQVKELLAMK.

A disordered region spans residues 1–40; sequence MPKMKTNSGSKKRFALTGTGKIKRKHAFHSHILTKKSKKR. The segment covering 21 to 40 has biased composition (basic residues); it reads KIKRKHAFHSHILTKKSKKR.

Belongs to the bacterial ribosomal protein bL35 family.

The polypeptide is Large ribosomal subunit protein bL35 (Bacteroides fragilis (strain ATCC 25285 / DSM 2151 / CCUG 4856 / JCM 11019 / LMG 10263 / NCTC 9343 / Onslow / VPI 2553 / EN-2)).